A 492-amino-acid polypeptide reads, in one-letter code: Cobyric acid synthase (492 aa).

Residues 259 to 453 (HTTVAVVAYP…LHGLFEDAVA (195 aa)) form the GATase cobBQ-type domain. The active-site Nucleophile is the cysteine 340. The active site involves histidine 445.

Belongs to the CobB/CobQ family. CobQ subfamily.

Its pathway is cofactor biosynthesis; adenosylcobalamin biosynthesis. In terms of biological role, catalyzes amidations at positions B, D, E, and G on adenosylcobyrinic A,C-diamide. NH(2) groups are provided by glutamine, and one molecule of ATP is hydrogenolyzed for each amidation. The sequence is that of Cobyric acid synthase from Paracidovorax citrulli (strain AAC00-1) (Acidovorax citrulli).